The primary structure comprises 186 residues: Threonylcarbamoyl-AMP synthase (186 aa).

Residues 5–186 (TQSINDAVKC…DAITGEILRL (182 aa)) form the YrdC-like domain.

It belongs to the SUA5 family. TsaC subfamily.

It is found in the cytoplasm. It carries out the reaction L-threonine + hydrogencarbonate + ATP = L-threonylcarbamoyladenylate + diphosphate + H2O. Functionally, required for the formation of a threonylcarbamoyl group on adenosine at position 37 (t(6)A37) in tRNAs that read codons beginning with adenine. Catalyzes the conversion of L-threonine, HCO(3)(-)/CO(2) and ATP to give threonylcarbamoyl-AMP (TC-AMP) as the acyladenylate intermediate, with the release of diphosphate. In Coxiella burnetii (strain RSA 331 / Henzerling II), this protein is Threonylcarbamoyl-AMP synthase.